The following is a 135-amino-acid chain: Protein PsiE homolog (135 aa).

The next 4 helical transmembrane spans lie at 14-34 (LQTILNIGLLVLATILVIFLV), 54-74 (YQLIEGIVIYFLYFEFIALIV), 82-102 (HFPLRYFIYIGITAIIRLIIV), and 107-127 (PSDTLMYSAAILLLVVTLYLA).

It belongs to the PsiE family.

Its subcellular location is the cell inner membrane. This chain is Protein PsiE homolog, found in Pectobacterium carotovorum subsp. carotovorum (strain PC1).